Here is a 691-residue protein sequence, read N- to C-terminus: DNA ligase (691 aa).

NAD(+)-binding positions include 41-45, 90-91, and Glu130; these read DAEYD and SL. Lys132 (N6-AMP-lysine intermediate) is an active-site residue. NAD(+) contacts are provided by Arg153, Glu190, Lys307, and Lys331. Residues Cys425, Cys428, Cys443, and Cys449 each coordinate Zn(2+). Residues 610–691 enclose the BRCT domain; it reads APQGVLAGKT…LHQLLEGNTP (82 aa).

It belongs to the NAD-dependent DNA ligase family. LigA subfamily. The cofactor is Mg(2+). Mn(2+) serves as cofactor.

The enzyme catalyses NAD(+) + (deoxyribonucleotide)n-3'-hydroxyl + 5'-phospho-(deoxyribonucleotide)m = (deoxyribonucleotide)n+m + AMP + beta-nicotinamide D-nucleotide.. In terms of biological role, DNA ligase that catalyzes the formation of phosphodiester linkages between 5'-phosphoryl and 3'-hydroxyl groups in double-stranded DNA using NAD as a coenzyme and as the energy source for the reaction. It is essential for DNA replication and repair of damaged DNA. The protein is DNA ligase of Burkholderia ambifaria (strain MC40-6).